A 238-amino-acid chain; its full sequence is Probable transcriptional regulatory protein CTA_0499 (238 aa).

Residues Met1–Lys21 form a disordered region. A compositionally biased stretch (basic residues) spans Asn9–Lys21.

Belongs to the TACO1 family.

It is found in the cytoplasm. In Chlamydia trachomatis serovar A (strain ATCC VR-571B / DSM 19440 / HAR-13), this protein is Probable transcriptional regulatory protein CTA_0499.